The primary structure comprises 230 residues: 2-C-methyl-D-erythritol 4-phosphate cytidylyltransferase (230 aa).

Belongs to the IspD/TarI cytidylyltransferase family. IspD subfamily.

It catalyses the reaction 2-C-methyl-D-erythritol 4-phosphate + CTP + H(+) = 4-CDP-2-C-methyl-D-erythritol + diphosphate. It participates in isoprenoid biosynthesis; isopentenyl diphosphate biosynthesis via DXP pathway; isopentenyl diphosphate from 1-deoxy-D-xylulose 5-phosphate: step 2/6. Its function is as follows. Catalyzes the formation of 4-diphosphocytidyl-2-C-methyl-D-erythritol from CTP and 2-C-methyl-D-erythritol 4-phosphate (MEP). This is 2-C-methyl-D-erythritol 4-phosphate cytidylyltransferase from Shewanella halifaxensis (strain HAW-EB4).